Reading from the N-terminus, the 423-residue chain is 3-phosphoshikimate 1-carboxyvinyltransferase (423 aa).

Positions 20, 21, and 25 each coordinate 3-phosphoshikimate. A phosphoenolpyruvate-binding site is contributed by Lys20. 2 residues coordinate phosphoenolpyruvate: Gly91 and Arg119. 6 residues coordinate 3-phosphoshikimate: Thr163, Ser164, Gln165, Asp305, Gln328, and Lys332. Residue Gln165 coordinates phosphoenolpyruvate. Catalysis depends on Asp305, which acts as the Proton acceptor. Residues Arg336 and Arg377 each coordinate phosphoenolpyruvate.

Belongs to the EPSP synthase family. Monomer.

The protein localises to the cytoplasm. The catalysed reaction is 3-phosphoshikimate + phosphoenolpyruvate = 5-O-(1-carboxyvinyl)-3-phosphoshikimate + phosphate. It participates in metabolic intermediate biosynthesis; chorismate biosynthesis; chorismate from D-erythrose 4-phosphate and phosphoenolpyruvate: step 6/7. Its function is as follows. Catalyzes the transfer of the enolpyruvyl moiety of phosphoenolpyruvate (PEP) to the 5-hydroxyl of shikimate-3-phosphate (S3P) to produce enolpyruvyl shikimate-3-phosphate and inorganic phosphate. The polypeptide is 3-phosphoshikimate 1-carboxyvinyltransferase (Acetivibrio thermocellus (strain ATCC 27405 / DSM 1237 / JCM 9322 / NBRC 103400 / NCIMB 10682 / NRRL B-4536 / VPI 7372) (Clostridium thermocellum)).